The chain runs to 1044 residues: Isoleucine--tRNA ligase (1044 aa).

Positions 49–59 (PYCSGRIHLGT) match the 'HIGH' region motif. The 'KMSKS' region motif lies at 591 to 595 (KMSKS). Residue Lys-594 participates in ATP binding.

Belongs to the class-I aminoacyl-tRNA synthetase family. IleS type 2 subfamily. As to quaternary structure, monomer. Zn(2+) is required as a cofactor.

Its subcellular location is the cytoplasm. The enzyme catalyses tRNA(Ile) + L-isoleucine + ATP = L-isoleucyl-tRNA(Ile) + AMP + diphosphate. Its function is as follows. Catalyzes the attachment of isoleucine to tRNA(Ile). As IleRS can inadvertently accommodate and process structurally similar amino acids such as valine, to avoid such errors it has two additional distinct tRNA(Ile)-dependent editing activities. One activity is designated as 'pretransfer' editing and involves the hydrolysis of activated Val-AMP. The other activity is designated 'posttransfer' editing and involves deacylation of mischarged Val-tRNA(Ile). The sequence is that of Isoleucine--tRNA ligase from Methanothermobacter thermautotrophicus (strain ATCC 29096 / DSM 1053 / JCM 10044 / NBRC 100330 / Delta H) (Methanobacterium thermoautotrophicum).